The primary structure comprises 255 residues: Keratin-associated protein 10-2 (255 aa).

A run of 22 repeats spans residues 26-30, 36-40, 57-61, 79-83, 89-93, 99-103, 104-108, 109-113, 114-118, 120-124, 130-134, 145-149, 150-154, 162-166, 172-176, 182-186, 187-191, 192-196, 197-201, 209-213, 219-223, and 224-228. The interval 26-228 is 22 X 5 AA repeats of C-C-X(3); the sequence is CCELPCGTPS…CCTSSCCRPS (203 aa).

Belongs to the KRTAP type 10 family. As to quaternary structure, interacts with hair keratins. As to expression, restricted to a narrow region of the hair fiber cuticle, lying approximately 20 cell layers above the apex of the dermal papilla of the hair root; not detected in any other tissues.

Functionally, in the hair cortex, hair keratin intermediate filaments are embedded in an interfilamentous matrix, consisting of hair keratin-associated proteins (KRTAP), which are essential for the formation of a rigid and resistant hair shaft through their extensive disulfide bond cross-linking with abundant cysteine residues of hair keratins. The matrix proteins include the high-sulfur and high-glycine-tyrosine keratins. In Homo sapiens (Human), this protein is Keratin-associated protein 10-2 (KRTAP10-2).